The primary structure comprises 142 residues: Large ribosomal subunit protein uL11 (142 aa).

The protein belongs to the universal ribosomal protein uL11 family. As to quaternary structure, part of the ribosomal stalk of the 50S ribosomal subunit. Interacts with L10 and the large rRNA to form the base of the stalk. L10 forms an elongated spine to which L12 dimers bind in a sequential fashion forming a multimeric L10(L12)X complex. Post-translationally, one or more lysine residues are methylated.

Forms part of the ribosomal stalk which helps the ribosome interact with GTP-bound translation factors. The chain is Large ribosomal subunit protein uL11 from Rhodopseudomonas palustris (strain BisA53).